Here is a 129-residue protein sequence, read N- to C-terminus: Selenoprotein M (129 aa).

An N-terminal signal peptide occupies residues 1–19 (MARGLAVFFLLAGACLALA). Residues Cys35 and Sec38 each act as nucleophile in the active site. Residue Sec38 is a non-standard amino acid, selenocysteine. The interval 107-129 (KSSKDEQVPEEYQEGPYMEKEEL) is disordered. Residues 126–129 (KEEL) carry the Prevents secretion from ER motif.

The protein belongs to the selenoprotein M/F family. As to expression, high expression levels observed in hepatopancreas, testis, ovaries and intestine. Also expressed in heart, stomach, gills, cranial ganglia, muscle and hematocytes.

The protein resides in the endoplasmic reticulum. Its function is as follows. May function as a thiol-disulfide oxidoreductase that participates in disulfide bond formation. Involved in the regulation of reproduction during the period of rapid gonadal development. The polypeptide is Selenoprotein M (Eriocheir sinensis (Chinese mitten crab)).